Consider the following 230-residue polypeptide: MVPEYSRFYNILGYNFKDYTLLIRALTHRSKTKKNYERLEFLGDSVLSFVIAEVLYKQFTDLAEGKLSQLRSKLVKGTTLAQLASSLKMDEYIILGASEQGGHKREKILEDVFEAVIGAIYLDSDFATVKKVILKWYQPIISSINLDTIKVKDSKSKLQEILLQNALSLPEYSIETIDGKDHEQQFTVVAVSKDLNLRVKAQGTSRKKAEQKTAEKMIEMLSQQGLHEKK.

An RNase III domain is found at Tyr5 to Asp125. Residue Glu40 participates in Mg(2+) binding. Residue Asp44 is part of the active site. 2 residues coordinate Mg(2+): Asp111 and Glu114. Residue Glu114 is part of the active site. The DRBM domain maps to Asp153–Gln223.

The protein belongs to the ribonuclease III family. As to quaternary structure, homodimer. It depends on Mg(2+) as a cofactor.

The protein resides in the cytoplasm. It catalyses the reaction Endonucleolytic cleavage to 5'-phosphomonoester.. Functionally, digests double-stranded RNA. Involved in the processing of primary rRNA transcript to yield the immediate precursors to the large and small rRNAs (23S and 16S). Processes some mRNAs, and tRNAs when they are encoded in the rRNA operon. Processes pre-crRNA and tracrRNA of type II CRISPR loci if present in the organism. The chain is Ribonuclease 3 from Francisella tularensis subsp. holarctica (strain LVS).